A 290-amino-acid polypeptide reads, in one-letter code: 2-dehydropantoate 2-reductase (290 aa).

NADP(+) contacts are provided by residues 8-13 (GPGAVG), Asn98, and Ala124. Asn98 contacts substrate. The Proton donor role is filled by Lys175. The substrate site is built by Asn179 and Ser244. Glu256 is an NADP(+) binding site.

The protein belongs to the ketopantoate reductase family.

The protein resides in the cytoplasm. It catalyses the reaction (R)-pantoate + NADP(+) = 2-dehydropantoate + NADPH + H(+). It functions in the pathway cofactor biosynthesis; (R)-pantothenate biosynthesis; (R)-pantoate from 3-methyl-2-oxobutanoate: step 2/2. Catalyzes the NADPH-dependent reduction of ketopantoate into pantoic acid. This Caulobacter vibrioides (strain ATCC 19089 / CIP 103742 / CB 15) (Caulobacter crescentus) protein is 2-dehydropantoate 2-reductase.